The sequence spans 134 residues: ATP synthase epsilon chain, chloroplastic (134 aa).

This sequence belongs to the ATPase epsilon chain family. As to quaternary structure, F-type ATPases have 2 components, CF(1) - the catalytic core - and CF(0) - the membrane proton channel. CF(1) has five subunits: alpha(3), beta(3), gamma(1), delta(1), epsilon(1). CF(0) has three main subunits: a, b and c.

It localises to the plastid. It is found in the chloroplast thylakoid membrane. Functionally, produces ATP from ADP in the presence of a proton gradient across the membrane. This chain is ATP synthase epsilon chain, chloroplastic, found in Amborella trichopoda.